Consider the following 765-residue polypeptide: Dipeptidyl peptidase 4 (765 aa).

At 1–6 (MKTPWK) the chain is on the cytoplasmic side. Residues 7–29 (VLLGLLAIAALVTVITVPVVLLT) form a helical; Signal-anchor for type II membrane protein membrane-spanning segment. The Extracellular segment spans residues 30–765 (KGNDASTDSR…HFLKQCFSLL (736 aa)). 9 N-linked (GlcNAc...) asparagine glycosylation sites follow: Asn84, Asn91, Asn149, Asn218, Asn228, Asn271, Asn280, Asn320, and Asn392. Cystine bridges form between Cys384–Cys393, Cys443–Cys446, and Cys453–Cys471. An N-linked (GlcNAc...) asparagine glycan is attached at Asn495. Ser629 functions as the Charge relay system in the catalytic mechanism. Cys648 and Cys761 are oxidised to a cystine. N-linked (GlcNAc...) asparagine glycosylation occurs at Asn684. Catalysis depends on charge relay system residues Asp707 and His739.

It belongs to the peptidase S9B family. DPPIV subfamily. In terms of assembly, monomer. Homodimer. Heterodimer with Seprase (FAP). Requires homodimerization for optimal dipeptidyl peptidase activity and T-cell costimulation. Found in a membrane raft complex, at least composed of BCL10, CARD11, DPP4 and IKBKB. Associates with collagen. Interacts with PTPRC; the interaction is enhanced in an interleukin-12-dependent manner in activated lymphocytes. Interacts (via extracellular domain) with ADA; does not inhibit its dipeptidyl peptidase activity. Interacts with CAV1 (via the N-terminus); the interaction is direct. Interacts (via cytoplasmic tail) with CARD11 (via PDZ domain); its homodimerization is necessary for interaction with CARD11. Interacts with IGF2R; the interaction is direct. Interacts with GPC3. The soluble form (Dipeptidyl peptidase 4 soluble form also named SDPP) derives from the membrane form (Dipeptidyl peptidase 4 membrane form also named MDPP) by proteolytic processing. Post-translationally, N- and O-Glycosylated. In terms of processing, phosphorylated. Mannose 6-phosphate residues in the carbohydrate moiety are necessary for interaction with IGF2R in activated T-cells. Mannose 6-phosphorylation is induced during T-cell activation. Intestinal epithelium, dendritic cells and several immune system tissues.

It localises to the secreted. It is found in the cell membrane. The protein localises to the apical cell membrane. The protein resides in the cell projection. Its subcellular location is the invadopodium membrane. It localises to the lamellipodium membrane. It is found in the cell junction. The protein localises to the membrane raft. The enzyme catalyses Release of an N-terminal dipeptide, Xaa-Yaa-|-Zaa-, from a polypeptide, preferentially when Yaa is Pro, provided Zaa is neither Pro nor hydroxyproline.. Its activity is regulated as follows. Inhibited by GPC3 and diprotin A. Its function is as follows. Cell surface glycoprotein receptor involved in the costimulatory signal essential for T-cell receptor (TCR)-mediated T-cell activation. Acts as a positive regulator of T-cell coactivation, by binding at least ADA, CAV1, IGF2R, and PTPRC. Its binding to CAV1 and CARD11 induces T-cell proliferation and NF-kappa-B activation in a T-cell receptor/CD3-dependent manner. Its interaction with ADA also regulates lymphocyte-epithelial cell adhesion. In association with FAP is involved in the pericellular proteolysis of the extracellular matrix (ECM), the migration and invasion of endothelial cells into the ECM. May be involved in the promotion of lymphatic endothelial cells adhesion, migration and tube formation. When overexpressed, enhanced cell proliferation, a process inhibited by GPC3. Also acts as a serine exopeptidase with a dipeptidyl peptidase activity that regulates various physiological processes by cleaving peptides in the circulation, including many chemokines, mitogenic growth factors, neuropeptides and peptide hormones. Removes N-terminal dipeptides sequentially from polypeptides having unsubstituted N-termini provided that the penultimate residue is proline. This Bos taurus (Bovine) protein is Dipeptidyl peptidase 4 (DPP4).